Consider the following 259-residue polypeptide: Virion protein US10 homolog (259 aa).

A zinc finger lies at 162 to 174 (CAHWCCLGHAFGC).

Belongs to the herpesviridae US10 family. In terms of processing, phosphorylated.

Its subcellular location is the virion tegument. It localises to the host nucleus matrix. The polypeptide is Virion protein US10 homolog (Equine herpesvirus 4 (strain 1942) (EHV-4)).